A 140-amino-acid polypeptide reads, in one-letter code: Peptide methionine sulfoxide reductase MsrB (140 aa).

In terms of domain architecture, MsrB spans 10–132; that stretch reads EEDWKSVLTP…NSVSLGFTKE (123 aa). 4 residues coordinate Zn(2+): Cys49, Cys52, Cys98, and Cys101. The Nucleophile role is filled by Cys121.

The protein belongs to the MsrB Met sulfoxide reductase family. Zn(2+) serves as cofactor.

The enzyme catalyses L-methionyl-[protein] + [thioredoxin]-disulfide + H2O = L-methionyl-(R)-S-oxide-[protein] + [thioredoxin]-dithiol. The sequence is that of Peptide methionine sulfoxide reductase MsrB from Methanosarcina mazei (strain ATCC BAA-159 / DSM 3647 / Goe1 / Go1 / JCM 11833 / OCM 88) (Methanosarcina frisia).